Here is a 75-residue protein sequence, read N- to C-terminus: uncharacterized protein (75 aa).

Low complexity predominate over residues 1–14; it reads MNDNNDNNNNNKNI. The segment at 1–30 is disordered; that stretch reads MNDNNDNNNNNKNIDNVDDDNDDNDKGKYK.

This is an uncharacterized protein from Dictyostelium discoideum (Social amoeba).